Here is a 466-residue protein sequence, read N- to C-terminus: Ribulose bisphosphate carboxylase large chain (466 aa).

Residue Lys5 is modified to N6,N6,N6-trimethyllysine. Residues Asn114 and Thr164 each coordinate substrate. Lys166 acts as the Proton acceptor in catalysis. Lys168 contacts substrate. Mg(2+) contacts are provided by Lys192, Asp194, and Glu195. Lys192 is modified (N6-carboxylysine). The active-site Proton acceptor is the His285. Substrate is bound by residues Arg286, His318, and Ser370.

This sequence belongs to the RuBisCO large chain family. Type I subfamily. As to quaternary structure, heterohexadecamer of 8 large chains and 8 small chains; disulfide-linked. The disulfide link is formed within the large subunit homodimers. It depends on Mg(2+) as a cofactor. Post-translationally, the disulfide bond which can form in the large chain dimeric partners within the hexadecamer appears to be associated with oxidative stress and protein turnover.

The protein resides in the plastid. The protein localises to the chloroplast. It carries out the reaction 2 (2R)-3-phosphoglycerate + 2 H(+) = D-ribulose 1,5-bisphosphate + CO2 + H2O. It catalyses the reaction D-ribulose 1,5-bisphosphate + O2 = 2-phosphoglycolate + (2R)-3-phosphoglycerate + 2 H(+). In terms of biological role, ruBisCO catalyzes two reactions: the carboxylation of D-ribulose 1,5-bisphosphate, the primary event in carbon dioxide fixation, as well as the oxidative fragmentation of the pentose substrate in the photorespiration process. Both reactions occur simultaneously and in competition at the same active site. The sequence is that of Ribulose bisphosphate carboxylase large chain from Cercidiphyllum japonicum (Katsura tree).